The chain runs to 534 residues: Cytokine-like nuclear factor N-PAC (534 aa).

A PWWP domain is found at 8–66; the sequence is QGDLVWGKLGRYPPWPGKIVNPPKDLKKPRGKKCLFVKFFGTEDHAWIKVEQLKPYHAH. Composition is skewed to basic and acidic residues over residues 93 to 122 and 138 to 157; these read AKAK…QTGE and RSRD…DKDS. Residues 93-168 form a disordered region; the sequence is AKAKEHAKEH…SPQPSSLKKL (76 aa). Residues 144-156 constitute a DNA-binding region (a.T hook); that stretch reads PRKRGRPPKDDKD. The segment at 190–193 is interaction with histone H3; sequence DSWL. Positions 242 to 534 are dehydrogenase domain; that stretch reads GNIIPTDKKI…MSAVYRAYIH (293 aa). NAD(+)-binding positions include 252-266, threonine 343, and lysine 486; that span reads GFLG…IVSN.

It belongs to the HIBADH-related family. NP60 subfamily. As to quaternary structure, homotetramere. Binds to mononucleosomes.

The protein resides in the nucleus. It localises to the chromosome. In terms of biological role, cytokine-like nuclear factor with chromatin gene reader activity involved in chromatin modification and regulation of gene expression. Acts as a nucleosome-destabilizing factor that is recruited to genes during transcriptional activation. Recognizes and binds histone H3 without a preference for specific epigenetic markers and also binds DNA. Interacts with KDM1B and promotes its histone demethylase activity by facilitating the capture of H3 tails, they form a multifunctional enzyme complex that modifies transcribed chromatin and facilitates Pol II transcription through nucleosomes. In Xenopus tropicalis (Western clawed frog), this protein is Cytokine-like nuclear factor N-PAC (glyr1).